The chain runs to 91 residues: Probable Fe(2+)-trafficking protein (91 aa).

It belongs to the Fe(2+)-trafficking protein family.

Could be a mediator in iron transactions between iron acquisition and iron-requiring processes, such as synthesis and/or repair of Fe-S clusters in biosynthetic enzymes. This chain is Probable Fe(2+)-trafficking protein, found in Shewanella denitrificans (strain OS217 / ATCC BAA-1090 / DSM 15013).